The chain runs to 512 residues: 2-isopropylmalate synthase (512 aa).

Residues 5–268 (LIIFDTTLRD…DIGIDTQQIL (264 aa)) form the Pyruvate carboxyltransferase domain. Mn(2+) contacts are provided by Asp14, His202, His204, and Asn239. The regulatory domain stretch occupies residues 394–512 (GFVSLSQHSE…SKADRVAAQG (119 aa)).

It belongs to the alpha-IPM synthase/homocitrate synthase family. LeuA type 1 subfamily. As to quaternary structure, homodimer. Requires Mn(2+) as cofactor.

Its subcellular location is the cytoplasm. It catalyses the reaction 3-methyl-2-oxobutanoate + acetyl-CoA + H2O = (2S)-2-isopropylmalate + CoA + H(+). The protein operates within amino-acid biosynthesis; L-leucine biosynthesis; L-leucine from 3-methyl-2-oxobutanoate: step 1/4. Functionally, catalyzes the condensation of the acetyl group of acetyl-CoA with 3-methyl-2-oxobutanoate (2-ketoisovalerate) to form 3-carboxy-3-hydroxy-4-methylpentanoate (2-isopropylmalate). In Polaromonas naphthalenivorans (strain CJ2), this protein is 2-isopropylmalate synthase.